The primary structure comprises 594 residues: Tyrosine-protein kinase RYK (594 aa).

An N-terminal signal peptide occupies residues 1–34; it reads MRAGRGGVPGSGGLRAPPPPLLLLLLAMLPAAAP. Residues 35-211 are Extracellular-facing; the sequence is RSPALAAAPA…VHAAPTTSTR (177 aa). Positions 50 to 178 constitute a WIF domain; the sequence is LYLSEDEVRR…VLNFKRRKMC (129 aa). Residues N123, N158, N162, N166, and N193 are each glycosylated (N-linked (GlcNAc...) asparagine). Residues 212 to 239 traverse the membrane as a helical segment; that stretch reads VFYISVGVCCAVIFLVAIILAVLHLHSM. Residues 240-594 are Cytoplasmic-facing; the sequence is KRIELDDSIS…EFHAALGAYV (355 aa). The segment covering 250–266 has biased composition (low complexity); that stretch reads ASSSSQGLSQPSTQTTQ. Residues 250-283 form a disordered region; the sequence is ASSSSQGLSQPSTQTTQYLRADTPNNATPITSSS. Over residues 272 to 283 the composition is skewed to polar residues; the sequence is TPNNATPITSSS. Residues 317–590 form the Protein kinase domain; that stretch reads ITLKDVLQEG…QCLTEFHAAL (274 aa). Residues 323-331 and K351 contribute to the ATP site; that span reads LQEGTFGRI. The active-site Proton acceptor is the D452. A Phosphotyrosine; by autocatalysis modification is found at Y482.

The protein belongs to the protein kinase superfamily. Tyr protein kinase family. In terms of assembly, interacts with DVL1 (via PDZ domain). Proteolytically cleaved, in part by presenilin, in response to WNT3 stimulation. As to expression, is detected in all the tissues. Highest levels are seen in the ovary, lung and placenta.

The protein resides in the membrane. Its subcellular location is the nucleus. The protein localises to the cytoplasm. The enzyme catalyses L-tyrosyl-[protein] + ATP = O-phospho-L-tyrosyl-[protein] + ADP + H(+). Its function is as follows. May be a coreceptor along with FZD8 of Wnt proteins, such as WNT1, WNT3, WNT3A and WNT5A. Involved in neuron differentiation, axon guidance, corpus callosum establishment and neurite outgrowth. In response to WNT3 stimulation, receptor C-terminal cleavage occurs in its transmembrane region and allows the C-terminal intracellular product to translocate from the cytoplasm to the nucleus where it plays a crucial role in neuronal development. The sequence is that of Tyrosine-protein kinase RYK (Ryk) from Mus musculus (Mouse).